We begin with the raw amino-acid sequence, 474 residues long: MKITHTAIEFAPVIKAGGLGDALYGLAKALAVNHTTEVVIPLYPKLFTSLHEQDLFATQKIPYFFAGEQEATAFSYFYEGIKVTLLKLDSQPELFEEAETIYTNDDAFRFCAFSAAAAAYIQKEGADIVHLHDWHVGLVAGLLKQQPCPQLQKIVLTLHNFGYRGYTTREVLEASSLNEFYLSHYQLFRDPQTCVLLKGALYCSDFVTTVSPTYAKEILQDYSDYEIHDAITARQHHLKGILNGIDYTILDPETDPHLAKNYSKVLFEDPKAFFEAKAENKKALYETLGLSLDKSPCMCIISRIAEQKGPEFMKQAILHALENAYTLIIIGTCYGGQIHKEFSNLQESLADSPNVRILLTYSDVLARQIFAAADMICIPSMFEPCGLTQMIGMRYGTVPVVRATGGLADTVTDGVNGFSFSNPHDFHEFRNMLSKAIATYRDDQDKWQQIVRSCLEFSSDLETAANKYLEIYQQ.

Lysine 15 is a binding site for ADP-alpha-D-glucose.

The protein belongs to the glycosyltransferase 1 family. Bacterial/plant glycogen synthase subfamily.

The enzyme catalyses [(1-&gt;4)-alpha-D-glucosyl](n) + ADP-alpha-D-glucose = [(1-&gt;4)-alpha-D-glucosyl](n+1) + ADP + H(+). It functions in the pathway glycan biosynthesis; glycogen biosynthesis. In terms of biological role, synthesizes alpha-1,4-glucan chains using ADP-glucose. This is Glycogen synthase from Chlamydia muridarum (strain MoPn / Nigg).